The sequence spans 225 residues: Ribose-5-phosphate isomerase A (225 aa).

Substrate-binding positions include 33–36 (TGST), 84–87 (DGAD), and 96–99 (KGGG). Residue Glu105 is the Proton acceptor of the active site. A substrate-binding site is contributed by Lys123.

Belongs to the ribose 5-phosphate isomerase family. In terms of assembly, homodimer.

The catalysed reaction is aldehydo-D-ribose 5-phosphate = D-ribulose 5-phosphate. It participates in carbohydrate degradation; pentose phosphate pathway; D-ribose 5-phosphate from D-ribulose 5-phosphate (non-oxidative stage): step 1/1. Its function is as follows. Catalyzes the reversible conversion of ribose-5-phosphate to ribulose 5-phosphate. The chain is Ribose-5-phosphate isomerase A from Halobacterium salinarum (strain ATCC 29341 / DSM 671 / R1).